A 248-amino-acid polypeptide reads, in one-letter code: MGYNKSLRYSRHNGTTCVIDNKHLKSLGSVLGDVRHKEELIREAQFDPIKDIANQYMVTEDPFRGPGKNVKITLFKEIRRIQPDTMKLVCNWSGKEFLRETWTRFISEEFPITTDQEIMDLWFELQLRPMQPNRCYKFTMQYALAANPDYVAHDVIRQHDPYYVGPDNRERINLSKRGLAFPLTCLQSIYNENFEEFFDQVLWPYFHRPLVYVGTTSAEIEEVMIEVALLFKIKEFAPDVPLFTGPAY.

This sequence belongs to the polyhedrin family.

In terms of biological role, component of the virus occlusion bodies, which are large proteinaceous structures, that protect the virus from the outside environment for extended periods until they are ingested by insect larvae. This chain is Granulin, found in Xestia c-nigrum granulosis virus (XnGV).